A 594-amino-acid polypeptide reads, in one-letter code: UvrABC system protein C (594 aa).

One can recognise a GIY-YIG domain in the interval 14 to 91 (DQPGCYLMKD…IKKHDPKYNI (78 aa)). The region spanning 196-231 (KEVRSELETKMYEASEKLEFERAKELRDQIAHIDAI) is the UVR domain.

The protein belongs to the UvrC family. As to quaternary structure, interacts with UvrB in an incision complex.

It is found in the cytoplasm. Functionally, the UvrABC repair system catalyzes the recognition and processing of DNA lesions. UvrC both incises the 5' and 3' sides of the lesion. The N-terminal half is responsible for the 3' incision and the C-terminal half is responsible for the 5' incision. This is UvrABC system protein C from Bacillus anthracis (strain A0248).